Consider the following 271-residue polypeptide: tRNA (guanine-N(1)-)-methyltransferase (271 aa).

S-adenosyl-L-methionine contacts are provided by residues G120 and 145 to 150 (IGDYVL).

It belongs to the RNA methyltransferase TrmD family. As to quaternary structure, homodimer.

Its subcellular location is the cytoplasm. The catalysed reaction is guanosine(37) in tRNA + S-adenosyl-L-methionine = N(1)-methylguanosine(37) in tRNA + S-adenosyl-L-homocysteine + H(+). In terms of biological role, specifically methylates guanosine-37 in various tRNAs. In Bifidobacterium longum subsp. infantis (strain ATCC 15697 / DSM 20088 / JCM 1222 / NCTC 11817 / S12), this protein is tRNA (guanine-N(1)-)-methyltransferase.